The following is a 304-amino-acid chain: tRNA pseudouridine synthase B (304 aa).

D48 acts as the Nucleophile in catalysis.

The protein belongs to the pseudouridine synthase TruB family. Type 1 subfamily.

It catalyses the reaction uridine(55) in tRNA = pseudouridine(55) in tRNA. Responsible for synthesis of pseudouridine from uracil-55 in the psi GC loop of transfer RNAs. The sequence is that of tRNA pseudouridine synthase B from Pseudomonas aeruginosa (strain UCBPP-PA14).